Here is a 158-residue protein sequence, read N- to C-terminus: MSDTMQSLDQLSALKTAESEAPKHTKKIDKYGRAYATGKRKDAVARVWIKPGAGKILVNAREVEVYFARPVLRMMIQQPLVAAARAGQYDVVCTVAGGGLSGQAGAVRHGLSKALTNFEPELRGVLKKGGFLTRDSRVVERKKYGKAKARRSFQFSKR.

This sequence belongs to the universal ribosomal protein uS9 family.

This chain is Small ribosomal subunit protein uS9, found in Nitrobacter hamburgensis (strain DSM 10229 / NCIMB 13809 / X14).